The sequence spans 132 residues: Phosphoribosyl-AMP cyclohydrolase (132 aa).

Aspartate 86 contributes to the Mg(2+) binding site. Cysteine 87 contributes to the Zn(2+) binding site. 2 residues coordinate Mg(2+): aspartate 88 and aspartate 90. Zn(2+)-binding residues include cysteine 103 and cysteine 110.

This sequence belongs to the PRA-CH family. In terms of assembly, homodimer. Mg(2+) serves as cofactor. The cofactor is Zn(2+).

It localises to the cytoplasm. The catalysed reaction is 1-(5-phospho-beta-D-ribosyl)-5'-AMP + H2O = 1-(5-phospho-beta-D-ribosyl)-5-[(5-phospho-beta-D-ribosylamino)methylideneamino]imidazole-4-carboxamide. The protein operates within amino-acid biosynthesis; L-histidine biosynthesis; L-histidine from 5-phospho-alpha-D-ribose 1-diphosphate: step 3/9. In terms of biological role, catalyzes the hydrolysis of the adenine ring of phosphoribosyl-AMP. The protein is Phosphoribosyl-AMP cyclohydrolase of Clavibacter michiganensis subsp. michiganensis (strain NCPPB 382).